We begin with the raw amino-acid sequence, 357 residues long: MVKLFIGNLPREATEQEIRSLFEQYGKVLECDIIKNYGFVHIEDKTAAEDAIRNLHHYKLHGVNINVEASKNKSKASTKLHVGNISPTCTNQELRAKFEEYGPVIECDIVKDYAFVHMERAEDAVEAIRGLDNTEFQGKRMHVQLSTSRLRTAPGMGDQSGCYRCGKEGHWSKECPVDRTGRVADFTEQYNEQYGAVRTPYTMGYGESMYYNDAYGALDYYKRYRVRSYEAVAAAAAASAYNYAEQTMSHLPQVQSSAVPSHLNSTSVDPYDRHLLQNSGSAATSAAMAAAASSSYYGRDRSPLRRNAAVLPAVGEGYGYGPESEMSQASAATRNSLYDMARYEREQYVDRTRYSAF.

RRM domains are found at residues 2 to 72 and 78 to 148; these read VKLF…ASKN and TKLH…LSTS. The segment at 160 to 177 adopts a CCHC-type zinc-finger fold; that stretch reads SGCYRCGKEGHWSKECPV. Residues 196–357 are interaction with TNPO3; the sequence is AVRTPYTMGY…YVDRTRYSAF (162 aa).

Interacts with TNPO3, which may mediate nuclear import of the protein. As to expression, expressed in the suprachiasmatic nucleus (SCN) (at protein level). Expressed in the suprachiasmatic nucleus (SCN).

Its subcellular location is the nucleus. The protein localises to the nucleolus. Functionally, required for the translational activation of PER1 mRNA in response to circadian clock. Binds directly to the 3'-UTR of the PER1 mRNA. The protein is RNA-binding protein 4B (Rbm4b) of Mus musculus (Mouse).